The following is a 450-amino-acid chain: Signal recognition particle 54 kDa protein (450 aa).

GTP is bound by residues 107-114 (GIQGSGKT), 188-192 (DTAGR), and 247-250 (TKLD).

The protein belongs to the GTP-binding SRP family. SRP54 subfamily. In terms of assembly, part of the signal recognition particle protein translocation system, which is composed of SRP and FtsY. Archaeal SRP consists of a 7S RNA molecule of 300 nucleotides and two protein subunits: SRP54 and SRP19.

It localises to the cytoplasm. It catalyses the reaction GTP + H2O = GDP + phosphate + H(+). Involved in targeting and insertion of nascent membrane proteins into the cytoplasmic membrane. Binds to the hydrophobic signal sequence of the ribosome-nascent chain (RNC) as it emerges from the ribosomes. The SRP-RNC complex is then targeted to the cytoplasmic membrane where it interacts with the SRP receptor FtsY. The protein is Signal recognition particle 54 kDa protein of Methanococcus maripaludis (strain C6 / ATCC BAA-1332).